The following is a 384-amino-acid chain: MKKNAVHFGAGNIGRGFIGKLLADADIAVTFADVNEPLVDQLSHQQEYKVKVVGSECKMETVSHVTAVNSASEALIERIIKTDLVTTAVGPTVLDIIAKTIAKGLSARFAAGNTQPLNIIACENMVRGTTHLKQQVYQFLTTEEQQQADALVGFVDSAVDRIVPPLQAANDDPLEVTVESFSEWIVDEQQFKGEIPQIEGMEKTDNLMAFVERKLFTLNTGHCVTAYLGCLKGHRTIREAIEDPCIHAQVKQAMQESGEVLIRRYGFDRALHSAYIEKILSRFANPYLVDEVDRVGRQPLRKLSANDRLIKPLLGTIEYGLPNGMLLKGIAAALKYRNSSDPQAVELQQSIEKEGVRSTLARYTGLAAESVEAQQIEALYQQMD.

Residue 5–16 (AVHFGAGNIGRG) coordinates NAD(+).

The protein belongs to the mannitol dehydrogenase family.

It catalyses the reaction D-mannitol 1-phosphate + NAD(+) = beta-D-fructose 6-phosphate + NADH + H(+). In Vibrio cholerae serotype O1 (strain ATCC 39541 / Classical Ogawa 395 / O395), this protein is Mannitol-1-phosphate 5-dehydrogenase.